Reading from the N-terminus, the 409-residue chain is Sulfide-quinone reductase (409 aa).

Residues 8-12, 34-35, and Cys-129 each bind FAD; these read GGRFG and NK. The active-site Cysteine persulfide intermediate is Cys-178. The FAD site is built by Asn-271, Asp-307, and Gly-317. Cys-350 acts as the Cysteine persulfide intermediate in catalysis.

Belongs to the SQRD family. Monomer. The cofactor is FAD.

It localises to the membrane. It carries out the reaction n a quinone + n hydrogen sulfide + n H(+) = polysulfur(n-2) + n a quinol. Inhibited by the quinone analog 2-heptyl-4-hydroxyquinolone N-oxide (HQNO). Inactivated by iodoacetamide treatment. Inhibited by KCN. Its function is as follows. Catalyzes the oxidation of sulfides, such as hydrogen sulfide, with the help of a quinone. Has the highest activity with caldariella quinone and decylubiquinone, and lower activity with naphtoquinones. Consecutive reaction cycles lead to the accumulation of a polysulfide product on the active site Cys residues; these products are released when they exceed a critical length, typically as cyclooctasulfur. The protein is Sulfide-quinone reductase of Acidianus ambivalens (Desulfurolobus ambivalens).